A 620-amino-acid polypeptide reads, in one-letter code: Glutathione-regulated potassium-efflux system protein KefC (620 aa).

12 consecutive transmembrane segments (helical) span residues 4 to 24 (HTLL…PIAV), 26 to 46 (LGLG…PWGL), 54 to 74 (SILH…GLEL), 90 to 110 (GALQ…FLGL), 114 to 134 (VAEL…MQAM), 149 to 169 (FAVL…IPLL), 178 to 198 (LGAF…VVLL), 218 to 238 (VFSA…EEVG), 270 to 290 (GLLL…GTLV), 294 to 314 (LRIL…LWLV), 327 to 347 (WFAV…GAAQ), and 359 to 379 (ALTL…VLLT). One can recognise an RCK N-terminal domain in the interval 399–518 (QPRVIVAGFG…AGVAMPERET (120 aa)). Residues 599-620 (QGTAEGKHSGEAADEPEVKPSI) are disordered.

The protein belongs to the monovalent cation:proton antiporter 2 (CPA2) transporter (TC 2.A.37) family. KefC subfamily. In terms of assembly, homodimer. Interacts with the regulatory subunit KefF.

The protein localises to the cell inner membrane. Pore-forming subunit of a potassium efflux system that confers protection against electrophiles. Catalyzes K(+)/H(+) antiport. The chain is Glutathione-regulated potassium-efflux system protein KefC from Salmonella choleraesuis (strain SC-B67).